The following is a 137-amino-acid chain: Large ribosomal subunit protein uL16 (137 aa).

The protein belongs to the universal ribosomal protein uL16 family. As to quaternary structure, part of the 50S ribosomal subunit.

In terms of biological role, binds 23S rRNA and is also seen to make contacts with the A and possibly P site tRNAs. This is Large ribosomal subunit protein uL16 from Mycoplasma capricolum subsp. capricolum (strain California kid / ATCC 27343 / NCTC 10154).